Consider the following 313-residue polypeptide: Putative S-adenosyl-L-methionine-dependent methyltransferase MAP_3563 (313 aa).

S-adenosyl-L-methionine-binding positions include D139 and 168–169; that span reads DL.

It belongs to the UPF0677 family.

In terms of biological role, exhibits S-adenosyl-L-methionine-dependent methyltransferase activity. In Mycolicibacterium paratuberculosis (strain ATCC BAA-968 / K-10) (Mycobacterium paratuberculosis), this protein is Putative S-adenosyl-L-methionine-dependent methyltransferase MAP_3563.